Reading from the N-terminus, the 309-residue chain is THO complex subunit Tho3 (309 aa).

WD repeat units follow at residues 22-61, 65-107, 109-148, 192-231, 234-273, and 275-309; these read GQQG…FKFT, GNRG…PIAE, ESNY…IMET, AHNS…CERS, RMDY…QIWK, and PTNG…IFGL.

The protein belongs to the THOC3 family. Component of the transcription/export (TREX) complex, which is at least is formed of SUB2, TEX1 and YRA1 and the THO complex composed of HPR1, MFT1, THO2 and THP1.

The protein resides in the nucleus. In terms of biological role, component of the TREX complex, which operates in coupling transcription elongation to mRNA export. The chain is THO complex subunit Tho3 (THO3) from Schizosaccharomyces pombe (strain 972 / ATCC 24843) (Fission yeast).